The following is a 119-amino-acid chain: MVKRSDKVGEEIHKIISELLIKGLKDPRIGFLTITGVKMTPDLRQATVYFTVHGSDEDKKNSEAGLNSAKGYIRKEIGQALKMRFVPEVLFKYDTSLDYGQHIESILKEIGATDDGEQS.

Belongs to the RbfA family. Monomer. Binds 30S ribosomal subunits, but not 50S ribosomal subunits or 70S ribosomes.

The protein resides in the cytoplasm. In terms of biological role, one of several proteins that assist in the late maturation steps of the functional core of the 30S ribosomal subunit. Associates with free 30S ribosomal subunits (but not with 30S subunits that are part of 70S ribosomes or polysomes). Required for efficient processing of 16S rRNA. May interact with the 5'-terminal helix region of 16S rRNA. This chain is Ribosome-binding factor A, found in Geobacter sp. (strain M21).